Reading from the N-terminus, the 298-residue chain is Tyrosine recombinase XerD (298 aa).

The Core-binding (CB) domain occupies 3-88 (SSHNNLLQNF…AIRQFYKFLK (86 aa)). The Tyr recombinase domain maps to 109 to 292 (SIPDYLTQDE…ANKTLREVHK (184 aa)). Catalysis depends on residues Arg149, Lys173, His244, Arg247, and His270. Residue Tyr279 is the O-(3'-phospho-DNA)-tyrosine intermediate of the active site.

Belongs to the 'phage' integrase family. XerD subfamily. In terms of assembly, forms a cyclic heterotetrameric complex composed of two molecules of XerC and two molecules of XerD.

The protein localises to the cytoplasm. In terms of biological role, site-specific tyrosine recombinase, which acts by catalyzing the cutting and rejoining of the recombining DNA molecules. The XerC-XerD complex is essential to convert dimers of the bacterial chromosome into monomers to permit their segregation at cell division. It also contributes to the segregational stability of plasmids. In Leptospira interrogans serogroup Icterohaemorrhagiae serovar copenhageni (strain Fiocruz L1-130), this protein is Tyrosine recombinase XerD.